A 721-amino-acid polypeptide reads, in one-letter code: Kinesin-like protein KIF2C (721 aa).

The segment at 1–250 (MESLHARLFP…CSPLTVTDPI (250 aa)) is globular. Phosphoserine is present on residues S3 and S19. S92 carries the post-translational modification Phosphoserine; by AURKB. Positions 95-98 (SKIP) match the Microtubule tip localization signal motif. Phosphoserine is present on residues S106, S108, S112, S162, S171, S183, and S188. The interval 164 to 188 (EAEEQAHSTRSTSSANPGNSVRRKS) is disordered. Polar residues predominate over residues 171-182 (STRSTSSANPGN). Residues 203 to 234 (EKRAQNSELRIKRAQEYDSSFPNWEFARMIKE) are negative regulator of microtubule-binding. The region spanning 254–584 (RICVCVRKRP…LRYADRVKEL (331 aa)) is the Kinesin motor domain. Residues R260 and 344–351 (GQTGSGKT) each bind ATP. Phosphoserine is present on residues S515 and S626. Residues 614 to 652 (GNEEEELSSQMSSFNEAMTQIRELEERALEELREIIQQG) adopt a coiled-coil conformation.

It belongs to the TRAFAC class myosin-kinesin ATPase superfamily. Kinesin family. MCAK/KIF2 subfamily. In terms of assembly, interacts with CENPH. Interacts with MTUS2/TIP150; the interaction is direct. Interacts with MAPRE1; the interaction is direct, regulated by phosphorylation and is probably required for targeting to growing microtubule plus ends. Interacts with KIF18B at microtubule tips; this interaction increases the affinity of both partners for microtubule plus ends and is required for robust microtubule depolymerization. Phosphorylation by AURKA or AURKB strongly reduces KIF18B-binding. Phosphorylation by AURKB, regulates association with centromeres and kinetochores and the microtubule depolymerization activity. Post-translationally, ubiquitinated.

Its subcellular location is the cytoplasm. It is found in the cytoskeleton. The protein resides in the nucleus. The protein localises to the chromosome. It localises to the centromere. Its subcellular location is the kinetochore. In terms of biological role, in complex with KIF18B, constitutes the major microtubule plus-end depolymerizing activity in mitotic cells. Regulates the turnover of microtubules at the kinetochore and functions in chromosome segregation during mitosis. Plays a role in chromosome congression and is required for the lateral to end-on conversion of the chromosome-microtubule attachment. The chain is Kinesin-like protein KIF2C (Kif2c) from Mus musculus (Mouse).